The sequence spans 191 residues: Probable DNA replication complex GINS protein PSF1 (191 aa).

The protein belongs to the GINS1/PSF1 family. In terms of assembly, component of the GINS complex which is a heterotetramer of gins1, gins2, gins3 and gins4.

It localises to the nucleus. Functionally, the GINS complex plays an essential role in the initiation of DNA replication. This chain is Probable DNA replication complex GINS protein PSF1 (gins1), found in Dictyostelium discoideum (Social amoeba).